Reading from the N-terminus, the 220-residue chain is N-(5'-phosphoribosyl)anthranilate isomerase (220 aa).

The protein belongs to the TrpF family.

The catalysed reaction is N-(5-phospho-beta-D-ribosyl)anthranilate = 1-(2-carboxyphenylamino)-1-deoxy-D-ribulose 5-phosphate. The protein operates within amino-acid biosynthesis; L-tryptophan biosynthesis; L-tryptophan from chorismate: step 3/5. The polypeptide is N-(5'-phosphoribosyl)anthranilate isomerase (Gloeothece citriformis (strain PCC 7424) (Cyanothece sp. (strain PCC 7424))).